Reading from the N-terminus, the 307-residue chain is Elongation factor Ts (307 aa).

The interval 79–82 is involved in Mg(2+) ion dislocation from EF-Tu; the sequence is TDFV.

Belongs to the EF-Ts family.

Its subcellular location is the cytoplasm. Functionally, associates with the EF-Tu.GDP complex and induces the exchange of GDP to GTP. It remains bound to the aminoacyl-tRNA.EF-Tu.GTP complex up to the GTP hydrolysis stage on the ribosome. In Sinorhizobium fredii (strain NBRC 101917 / NGR234), this protein is Elongation factor Ts.